A 57-amino-acid polypeptide reads, in one-letter code: UPF0391 membrane protein NE0130 (57 aa).

2 helical membrane passes run 1 to 21 (MLKWAIIFAIISFISGVFGFR) and 33 to 53 (FLFFLFALITLVLLVLGLLGI).

Belongs to the UPF0391 family.

Its subcellular location is the cell membrane. The sequence is that of UPF0391 membrane protein NE0130 from Nitrosomonas europaea (strain ATCC 19718 / CIP 103999 / KCTC 2705 / NBRC 14298).